A 353-amino-acid polypeptide reads, in one-letter code: Small ribosomal subunit biogenesis GTPase RsgA (353 aa).

The span at 1-17 (MSKNKLSKGQQRRVNAN) shows a compositional bias: polar residues. A disordered region spans residues 1–25 (MSKNKLSKGQQRRVNANHQRRLKTT). Residues 104-274 (ASVLTRPDFY…VIDSPGVREF (171 aa)) form the CP-type G domain. GTP-binding positions include 160 to 163 (NKID) and 214 to 222 (GQSGVGKSS). Positions 298, 303, 305, and 311 each coordinate Zn(2+).

The protein belongs to the TRAFAC class YlqF/YawG GTPase family. RsgA subfamily. As to quaternary structure, monomer. Associates with 30S ribosomal subunit, binds 16S rRNA. It depends on Zn(2+) as a cofactor.

The protein localises to the cytoplasm. In terms of biological role, one of several proteins that assist in the late maturation steps of the functional core of the 30S ribosomal subunit. Helps release RbfA from mature subunits. May play a role in the assembly of ribosomal proteins into the subunit. Circularly permuted GTPase that catalyzes slow GTP hydrolysis, GTPase activity is stimulated by the 30S ribosomal subunit. This Klebsiella pneumoniae (strain 342) protein is Small ribosomal subunit biogenesis GTPase RsgA.